The primary structure comprises 290 residues: 4-hydroxy-tetrahydrodipicolinate synthase (290 aa).

Threonine 44 provides a ligand contact to pyruvate. Tyrosine 132 (proton donor/acceptor) is an active-site residue. Lysine 160 acts as the Schiff-base intermediate with substrate in catalysis. Isoleucine 202 serves as a coordination point for pyruvate.

It belongs to the DapA family. In terms of assembly, homotetramer; dimer of dimers.

The protein resides in the cytoplasm. It carries out the reaction L-aspartate 4-semialdehyde + pyruvate = (2S,4S)-4-hydroxy-2,3,4,5-tetrahydrodipicolinate + H2O + H(+). Its pathway is amino-acid biosynthesis; L-lysine biosynthesis via DAP pathway; (S)-tetrahydrodipicolinate from L-aspartate: step 3/4. Functionally, catalyzes the condensation of (S)-aspartate-beta-semialdehyde [(S)-ASA] and pyruvate to 4-hydroxy-tetrahydrodipicolinate (HTPA). This is 4-hydroxy-tetrahydrodipicolinate synthase from Trichlorobacter lovleyi (strain ATCC BAA-1151 / DSM 17278 / SZ) (Geobacter lovleyi).